We begin with the raw amino-acid sequence, 161 residues long: Phosphopantetheine adenylyltransferase (161 aa).

Residue Ser10 coordinates substrate. Residues 10-11 and His18 each bind ATP; that span reads SF. Substrate-binding residues include Lys42, Ala75, and Arg89. ATP-binding positions include 90–92, Glu100, and 125–131; these read GLR and LSPISSS.

Belongs to the bacterial CoaD family. In terms of assembly, homohexamer. The cofactor is Mg(2+).

It is found in the cytoplasm. It carries out the reaction (R)-4'-phosphopantetheine + ATP + H(+) = 3'-dephospho-CoA + diphosphate. Its pathway is cofactor biosynthesis; coenzyme A biosynthesis; CoA from (R)-pantothenate: step 4/5. Functionally, reversibly transfers an adenylyl group from ATP to 4'-phosphopantetheine, yielding dephospho-CoA (dPCoA) and pyrophosphate. This is Phosphopantetheine adenylyltransferase from Streptococcus agalactiae serotype Ia (strain ATCC 27591 / A909 / CDC SS700).